Reading from the N-terminus, the 106-residue chain is PTS system fructose-like EIIB component 2 (106 aa).

The PTS EIIB type-2 domain maps to 1 to 103 (MTKIIAVTAC…IMSKIEAHLA (103 aa)). The active-site Phosphocysteine intermediate is the cysteine 10. Cysteine 10 is modified (phosphocysteine; by EIIA).

It localises to the cytoplasm. It carries out the reaction D-fructose(out) + N(pros)-phospho-L-histidyl-[protein] = D-fructose 1-phosphate(in) + L-histidyl-[protein]. The phosphoenolpyruvate-dependent sugar phosphotransferase system (sugar PTS), a major carbohydrate active transport system, catalyzes the phosphorylation of incoming sugar substrates concomitantly with their translocation across the cell membrane. The enzyme II FrwABC PTS system is involved in fructose transport. This Escherichia coli O157:H7 protein is PTS system fructose-like EIIB component 2 (frwB).